Here is a 159-residue protein sequence, read N- to C-terminus: NAD(P)H-quinone oxidoreductase subunit J, chloroplastic (159 aa).

This sequence belongs to the complex I 30 kDa subunit family. As to quaternary structure, NDH is composed of at least 16 different subunits, 5 of which are encoded in the nucleus.

It localises to the plastid. It is found in the chloroplast thylakoid membrane. It carries out the reaction a plastoquinone + NADH + (n+1) H(+)(in) = a plastoquinol + NAD(+) + n H(+)(out). The catalysed reaction is a plastoquinone + NADPH + (n+1) H(+)(in) = a plastoquinol + NADP(+) + n H(+)(out). Functionally, NDH shuttles electrons from NAD(P)H:plastoquinone, via FMN and iron-sulfur (Fe-S) centers, to quinones in the photosynthetic chain and possibly in a chloroplast respiratory chain. The immediate electron acceptor for the enzyme in this species is believed to be plastoquinone. Couples the redox reaction to proton translocation, and thus conserves the redox energy in a proton gradient. The chain is NAD(P)H-quinone oxidoreductase subunit J, chloroplastic from Agrostis stolonifera (Creeping bentgrass).